Consider the following 105-residue polypeptide: Synaptic plasticity regulator PANTS (105 aa).

This sequence belongs to the UPF0545 family. As to quaternary structure, interacts with RTN4 isoform A/Nogo-A; the interaction results in enhanced RTN4-mediated inhibition of AMPA receptor clustering. Also interacts with NCAM1, RANBP2 and CCT8. In terms of processing, rapidly degraded by proteolysis following neuronal stimulation, resulting in increased AMPA receptor clustering.

The protein localises to the synapse. It is found in the synaptic cleft. In terms of biological role, negatively regulates long-term potentiation and modulates adult synaptic plasticity. Stabilizes the interaction of RTN4 isoform A/Nogo-A with its receptors, inhibiting clustering of postsynaptic AMPA receptors at synaptic sites. Upon neuronal stimulation, degraded at synapses, reducing RTN4 signaling and allowing AMPA receptor clustering at individual synapses. The sequence is that of Synaptic plasticity regulator PANTS (C22orf39) from Homo sapiens (Human).